Here is a 382-residue protein sequence, read N- to C-terminus: tRNA (guanine(26)-N(2))-dimethyltransferase (382 aa).

Residues 4-373 (VEIIEGKARI…KNLDEIKECI (370 aa)) enclose the Trm1 methyltransferase domain. 3 residues coordinate S-adenosyl-L-methionine: arginine 44, arginine 69, and aspartate 87. Cysteine 246, cysteine 249, cysteine 263, and cysteine 266 together coordinate Zn(2+).

The protein belongs to the class I-like SAM-binding methyltransferase superfamily. Trm1 family.

It catalyses the reaction guanosine(26) in tRNA + 2 S-adenosyl-L-methionine = N(2)-dimethylguanosine(26) in tRNA + 2 S-adenosyl-L-homocysteine + 2 H(+). Dimethylates a single guanine residue at position 26 of a number of tRNAs using S-adenosyl-L-methionine as donor of the methyl groups. In Sulfolobus acidocaldarius (strain ATCC 33909 / DSM 639 / JCM 8929 / NBRC 15157 / NCIMB 11770), this protein is tRNA (guanine(26)-N(2))-dimethyltransferase.